Reading from the N-terminus, the 301-residue chain is Fluoroquinolones export ATP-binding protein MT2762 (301 aa).

One can recognise an ABC transporter domain in the interval 18–246; the sequence is IRVRGLTFRY…RSRRRVRVEY (229 aa). 52 to 59 is a binding site for ATP; that stretch reads GPSGAGKS.

This sequence belongs to the ABC transporter superfamily. As to quaternary structure, the complex is composed of 2 ATP-binding proteins and 2 transmembrane proteins.

Its subcellular location is the cell membrane. Its function is as follows. Part of the ABC transporter complex involved in fluoroquinolones export. Probably responsible for energy coupling to the transport system. In Mycobacterium tuberculosis (strain CDC 1551 / Oshkosh), this protein is Fluoroquinolones export ATP-binding protein MT2762.